Reading from the N-terminus, the 490-residue chain is Cytochrome P450 2C20 (490 aa).

Cys435 contacts heme.

This sequence belongs to the cytochrome P450 family. Requires heme as cofactor.

The protein localises to the endoplasmic reticulum membrane. It localises to the microsome membrane. It catalyses the reaction an organic molecule + reduced [NADPH--hemoprotein reductase] + O2 = an alcohol + oxidized [NADPH--hemoprotein reductase] + H2O + H(+). Functionally, cytochromes P450 are a group of heme-thiolate monooxygenases. In liver microsomes, this enzyme is involved in an NADPH-dependent electron transport pathway. It oxidizes a variety of structurally unrelated compounds, including steroids, fatty acids, and xenobiotics. This Macaca fascicularis (Crab-eating macaque) protein is Cytochrome P450 2C20 (CYP2C20).